A 137-amino-acid polypeptide reads, in one-letter code: MLCISNIMLEKPNKGGIMRYGKIGVATAMAVGAAVGYAVESGKWFITVIAVLAGVALLSLVKRRVDEVVEDERTVRVGERASRRTVEIFSIGAALSGAVMLALDLHTEAALALEFAVCCVLVLYLIFYGYYSFRALD.

Helical transmembrane passes span 20–39 (YGKI…GYAV), 44–61 (WFIT…LSLV), 86–105 (VEIF…ALDL), and 109–131 (AALA…YGYY).

It localises to the cell membrane. This is an uncharacterized protein from Archaeoglobus fulgidus (strain ATCC 49558 / DSM 4304 / JCM 9628 / NBRC 100126 / VC-16).